Here is a 1392-residue protein sequence, read N- to C-terminus: DNA-directed RNA polymerase subunit beta (1392 aa).

Belongs to the RNA polymerase beta chain family. In terms of assembly, the RNAP catalytic core consists of 2 alpha, 1 beta, 1 beta' and 1 omega subunit. When a sigma factor is associated with the core the holoenzyme is formed, which can initiate transcription.

The catalysed reaction is RNA(n) + a ribonucleoside 5'-triphosphate = RNA(n+1) + diphosphate. Functionally, DNA-dependent RNA polymerase catalyzes the transcription of DNA into RNA using the four ribonucleoside triphosphates as substrates. This chain is DNA-directed RNA polymerase subunit beta, found in Neisseria gonorrhoeae (strain NCCP11945).